Consider the following 309-residue polypeptide: Uricase-2 isozyme 1 (309 aa).

Active-site charge relay system residues include lysine 18 and threonine 64. Urate-binding residues include threonine 64, aspartate 65, phenylalanine 166, arginine 183, valine 238, glutamine 239, and asparagine 265. Histidine 267 (charge relay system) is an active-site residue. Residues 307–309 (SKL) carry the Microbody targeting signal motif.

Belongs to the uricase family. As to quaternary structure, homotetramer. In terms of processing, the N-terminus is blocked. In terms of tissue distribution, expressed predominantly in the uninfected cells of the central tissue of the root nodule.

The protein localises to the peroxisome. It catalyses the reaction urate + O2 + H2O = 5-hydroxyisourate + H2O2. Its pathway is purine metabolism; urate degradation; (S)-allantoin from urate: step 1/3. Functionally, catalyzes the oxidation of uric acid to 5-hydroxyisourate, which is further processed to form (S)-allantoin. This is Uricase-2 isozyme 1 from Glycine max (Soybean).